The primary structure comprises 954 residues: Centrosomal protein of 112 kDa (954 aa).

A coiled-coil region spans residues 276 to 954 (QKHDAEVQKI…EELTTYQSRR (679 aa)).

The protein resides in the cytoplasm. It is found in the cytoskeleton. It localises to the microtubule organizing center. Its subcellular location is the centrosome. The sequence is that of Centrosomal protein of 112 kDa (Cep112) from Mus musculus (Mouse).